The following is a 692-amino-acid chain: Protein hook (692 aa).

One can recognise a Calponin-homology (CH) domain in the interval 6-123 (SEMYYSLLEW…RLLQLVLGCA (118 aa)). Residues 135–576 (EIMGLEEELQ…YQSKVIQLET (442 aa)) adopt a coiled-coil conformation. The interval 161 to 180 (AGERSPSSSASGGAGSGGAV) is disordered.

It belongs to the hook family. Homodimer. Interacts with microtubules via its N-terminus.

It is found in the cytoplasm. The protein localises to the cytoskeleton. Its subcellular location is the endosome. It localises to the synapse. Its function is as follows. Involved in endocytic trafficking by stabilizing organelles of the endocytic pathway. Probably acts as a cytoskeletal linker protein required to tether endosome vesicles to the cytoskeleton. Involved in modulation of endocytosis at stages required for down-regulation of membrane proteins that control synapse size. Not involved in synaptic vesicle recycling. Required in R7 cells for boss endocytosis into multivesicular bodies (MVBs). Has a role in regulating adult longevity. The protein is Protein hook of Drosophila willistoni (Fruit fly).